The following is a 788-amino-acid chain: Protein translocase subunit SecA 2 (788 aa).

ATP contacts are provided by residues glutamine 86, 104–108 (GEGKT), and aspartate 493.

The protein belongs to the SecA family. Monomer and homodimer. Part of the essential Sec protein translocation apparatus which comprises SecA, SecYEG and auxiliary proteins SecDF. Other proteins may also be involved.

Its subcellular location is the cell membrane. The protein localises to the cytoplasm. The enzyme catalyses ATP + H2O + cellular proteinSide 1 = ADP + phosphate + cellular proteinSide 2.. Its function is as follows. Part of the Sec protein translocase complex. Interacts with the SecYEG preprotein conducting channel. Has a central role in coupling the hydrolysis of ATP to the transfer of proteins into and across the cell membrane, serving as an ATP-driven molecular motor driving the stepwise translocation of polypeptide chains across the membrane. This is Protein translocase subunit SecA 2 from Bacillus anthracis.